The chain runs to 953 residues: Xylosyltransferase 1 (953 aa).

Over 1–17 (MVAAPCARRLARRSHSA) the chain is Cytoplasmic. The chain crosses the membrane as a helical; Signal-anchor for type II membrane protein span at residues 18-38 (LLAALMVLLLHTLVVWNFSSL). Topologically, residues 39 to 953 (DSGAGEQRRA…GAVKPDGRLR (915 aa)) are lumenal. The segment covering 48 to 62 (AGAAAGAAEQQQPAA) has biased composition (low complexity). Disordered regions lie at residues 48–67 (AGAA…RRER) and 74–251 (LPAA…APKC). The span at 79 to 97 (GGPGGRAGGGGARGGGPGG) shows a compositional bias: gly residues. Basic and acidic residues predominate over residues 138-154 (KVRTDSNNENSVPKDFE). A compositionally biased stretch (polar residues) spans 156–165 (VDNSNFAPRT). 2 stretches are compositionally biased toward basic and acidic residues: residues 170-197 (HQPE…DKRQ) and 205-216 (GPKEVLPPREKA). Asn219 carries N-linked (GlcNAc...) asparagine glycosylation. 4 disulfide bridges follow: Cys251/Cys279, Cys295/Cys536, Cys555/Cys568, and Cys557/Cys566. UDP-alpha-D-xylose contacts are provided by residues Val327, Asp355, and 384–386 (TIW). N-linked (GlcNAc...) asparagine glycosylation occurs at Asn415. 488–489 (DW) is a binding site for UDP-alpha-D-xylose. UDP-alpha-D-xylose contacts are provided by residues Ser569 and 592 to 593 (RK). 2 disulfides stabilise this stretch: Cys669/Cys921 and Cys914/Cys927. N-linked (GlcNAc...) asparagine glycosylation is present at Asn771. Positions 933–953 (SSFSPDPKSELGAVKPDGRLR) are disordered.

The protein belongs to the glycosyltransferase 14 family. XylT subfamily. As to quaternary structure, monomer. Requires a divalent metal cation as cofactor. In terms of processing, contains 7 disulfide bonds. N-glycosylated. Detected in brain, spleen, kidney and testis, and at low levels in skeletal muscle.

The protein localises to the golgi apparatus membrane. It catalyses the reaction UDP-alpha-D-xylose + L-seryl-[protein] = 3-O-(beta-D-xylosyl)-L-seryl-[protein] + UDP + H(+). It participates in glycan metabolism; chondroitin sulfate biosynthesis. Its pathway is glycan metabolism; heparan sulfate biosynthesis. In terms of biological role, catalyzes the first step in the biosynthesis of chondroitin sulfate and dermatan sulfate proteoglycans, such as DCN. Transfers D-xylose from UDP-D-xylose to specific serine residues of the core protein. Required for normal maturation of chondrocytes during bone development, normal onset of ossification and normal embryonic and postnatal skeleton development, especially of the long bones. This is Xylosyltransferase 1 (Xylt1) from Mus musculus (Mouse).